The chain runs to 92 residues: MGGGTSPEAQQDSVMRTDSSEMTDVESVITSFASSARAGRRNALPDIQSSLATSGSSDLPLKLEALAVKEDAKTKNEEKDQGQPKTPLNEGK.

A disordered region spans residues 1–26 (MGGGTSPEAQQDSVMRTDSSEMTDVE). Polar residues predominate over residues 7–26 (PEAQQDSVMRTDSSEMTDVE). The residue at position 56 (S56) is a Phosphoserine. Over residues 70–82 (EDAKTKNEEKDQG) the composition is skewed to basic and acidic residues. Positions 70–92 (EDAKTKNEEKDQGQPKTPLNEGK) are disordered.

The protein belongs to the PKI family.

In terms of biological role, extremely potent competitive inhibitor of cAMP-dependent protein kinase activity, this protein interacts with the catalytic subunit of the enzyme after the cAMP-induced dissociation of its regulatory chains. The sequence is that of cAMP-dependent protein kinase inhibitor beta (Pkib) from Mus musculus (Mouse).